Here is a 106-residue protein sequence, read N- to C-terminus: Gibberellin-regulated protein 4 (106 aa).

A signal peptide spans 1–25 (MAKSYGAIFLLTLIVLFMLQTMVMA).

The protein belongs to the GASA family. Six disulfide bonds may be present. In terms of tissue distribution, expressed in flower buds, style, stamen filaments, vasculature of petals, root phloem, vasculature of cotyledons and rosette leaves and developing embryo.

The protein resides in the secreted. Gibberellin-regulated protein involved in the regulation of floral meristem and floral organ identity, and promotion of seed size and weight. May play a role in the promotion of gibberellin responses such as regulation of flowering under short-day conditions, seed germination and inhibition of gibberellin oxidase. Possesses redox activity in E.coli and may function in redox regulation in planta. In Arabidopsis thaliana (Mouse-ear cress), this protein is Gibberellin-regulated protein 4 (GASA4).